A 423-amino-acid chain; its full sequence is MSIKLQPVKGSKDLLPEEFGKHDYIVSVSRNLSQLYGFQPISTPIIEYTEIFNRTLGKDSDVLSKEMYVFLDKGNRSVSLRPEFTASIMRAVIYNNLQNKKLPLKYFSSGPAFRYDNPQAGRQRQFHQINLECIGDDSPFSDAEIVLLAHDILKTLNLVDKVNLEINSLGCMESRAKYQQALVEYFSKYRTELSQDSQSRLIENPLRILDSKNLHDKKISASAPSIHDYYTIKSRCYFDKVLEYLEFCGIKYTINANLVRGLDYYCHTVFEYTSTQIGAQSTVLGGGRYDGLFEQMGGKLASGKKTLPAIGFAAGIERLALLTNYTPVDVRPIVIIPVDEEHHQHGIMLLQKLRNNNITTVIDLQDSISKRLNRANYIKASKVIFIGAIEVREQSYRIKDLDTSNECVIIHNELLSYLQNNCS.

It belongs to the class-II aminoacyl-tRNA synthetase family. Homodimer.

Its subcellular location is the cytoplasm. It carries out the reaction tRNA(His) + L-histidine + ATP = L-histidyl-tRNA(His) + AMP + diphosphate + H(+). This Orientia tsutsugamushi (strain Ikeda) (Rickettsia tsutsugamushi) protein is Histidine--tRNA ligase.